The chain runs to 430 residues: MKVALPKGVFDIFPYITDAKHMWRHTSLWHRVEDVIHEVCDLYGFSEIRTPVFEKSEVFLHVGEQSDIVKKEMYTFLDKKGRSLTLRPEGTAPIVRSFIDNPMSQREDNKFYYILPMFRYERQQSGRYRQHHQFGVEAIGVRHPLRDAEVLSLLWNFYSAIGLQYMQIQLNFLGGSATRKRYDQVLRGYFLQHLDSLSSLSKERFNTNLLRILDSKEPEDQEIIKSAPPILEYVSDEDRKYFDEILSALSALNIPYSINSRLVRGLDYYTDVVFEAITTFGGHSYALGGGGRYDGLIAASGGVATPACGFGVGLERVIQTLLAQGNLTLPSSHKLRLIPVEPEADSFCFVWAQHLRSLGIPTEVDWTHKKLKAALKTADTEKVTFVCPIGERELLSEQLTIKNMSLRQEFSGSKQEVEQRLLYEIQNTSL.

It belongs to the class-II aminoacyl-tRNA synthetase family. Homodimer.

The protein localises to the cytoplasm. The catalysed reaction is tRNA(His) + L-histidine + ATP = L-histidyl-tRNA(His) + AMP + diphosphate + H(+). In Chlamydia caviae (strain ATCC VR-813 / DSM 19441 / 03DC25 / GPIC) (Chlamydophila caviae), this protein is Histidine--tRNA ligase.